Consider the following 500-residue polypeptide: Cytochrome P450 2D20 (500 aa).

Cys446 lines the heme pocket.

It belongs to the cytochrome P450 family. It depends on heme as a cofactor.

The protein resides in the endoplasmic reticulum membrane. Its subcellular location is the microsome membrane. The chain is Cytochrome P450 2D20 (CYP2D20) from Mesocricetus auratus (Golden hamster).